The following is a 149-amino-acid chain: Large ribosomal subunit protein uL13 (149 aa).

The protein belongs to the universal ribosomal protein uL13 family. As to quaternary structure, part of the 50S ribosomal subunit.

Functionally, this protein is one of the early assembly proteins of the 50S ribosomal subunit, although it is not seen to bind rRNA by itself. It is important during the early stages of 50S assembly. This Gemmatimonas aurantiaca (strain DSM 14586 / JCM 11422 / NBRC 100505 / T-27) protein is Large ribosomal subunit protein uL13.